A 464-amino-acid polypeptide reads, in one-letter code: UNC93-like protein 3 (464 aa).

11 consecutive transmembrane segments (helical) span residues 31–51 (VHILSISFLLIFLAYGAAQNL), 62–82 (ISLGILYVSFMFCSMVASLVV), 84–104 (LMGSKNALVLGTTGYWLFVAA), 110–130 (WFTMVPASLYLGFAASIIWVG), 160–180 (EFWAMFACHQLFGNLITLALL), 192–212 (TLLMLVFLFSMTLGTILMFFI), 251–271 (LLIVPLLAYSGLQQAFVWAEF), 275–295 (IVTPAIGVSGVGGAMAVYGAL), 313–333 (ITFIVSGGAVAQASVFLWLLL), 341–361 (VLGTAYPLIMAAILGIGDGIL), and 392–412 (IAIVFFLSPYISLQAMLIVML).

The protein belongs to the unc-93 family.

It localises to the membrane. In Arabidopsis thaliana (Mouse-ear cress), this protein is UNC93-like protein 3.